The sequence spans 77 residues: U8-lycotoxin-Ls1t (77 aa).

The N-terminal stretch at 1–20 (MKLIIFTGLVPFAIVSLIEA) is a signal peptide. A propeptide spanning residues 21–26 (QAENEK) is cleaved from the precursor.

Belongs to the neurotoxin 19 (CSTX) family. 08 (U8-Lctx) subfamily. Contains 4 disulfide bonds. As to expression, expressed by the venom gland.

Its subcellular location is the secreted. The sequence is that of U8-lycotoxin-Ls1t from Lycosa singoriensis (Wolf spider).